Consider the following 478-residue polypeptide: Probable cytosol aminopeptidase (478 aa).

Lys244 and Asp249 together coordinate Mn(2+). Lys256 is a catalytic residue. Mn(2+) contacts are provided by Asp267, Asp326, and Glu328. Residue Arg330 is part of the active site.

Belongs to the peptidase M17 family. The cofactor is Mn(2+).

It is found in the cytoplasm. It carries out the reaction Release of an N-terminal amino acid, Xaa-|-Yaa-, in which Xaa is preferably Leu, but may be other amino acids including Pro although not Arg or Lys, and Yaa may be Pro. Amino acid amides and methyl esters are also readily hydrolyzed, but rates on arylamides are exceedingly low.. The catalysed reaction is Release of an N-terminal amino acid, preferentially leucine, but not glutamic or aspartic acids.. In terms of biological role, presumably involved in the processing and regular turnover of intracellular proteins. Catalyzes the removal of unsubstituted N-terminal amino acids from various peptides. In Fusobacterium nucleatum subsp. nucleatum (strain ATCC 25586 / DSM 15643 / BCRC 10681 / CIP 101130 / JCM 8532 / KCTC 2640 / LMG 13131 / VPI 4355), this protein is Probable cytosol aminopeptidase.